The primary structure comprises 336 residues: Vacuolar protein sorting-associated protein 26B (336 aa).

3 positions are modified to phosphoserine: S302, S304, and S319.

Belongs to the VPS26 family. Component of the heterotrimeric retromer cargo-selective complex (CSC), also described as vacuolar protein sorting subcomplex (VPS), formed by VPS26 (VPS26A or VPS26B), VPS29 and VPS35. The CSC has a highly elongated structure with VPS26 and VPS29 binding independently at opposite distal ends of VPS35 as central platform. The CSC is believed to associate with variable sorting nexins to form functionally distinct retromer complex variants. The originally described SNX-BAR retromer is a pentamer containing the CSC and a heterodimeric membrane-deforming subcomplex formed between SNX1 or SNX2 and SNX5 or SNX6 (also called SNX-BAR subcomplex); the respective CSC and SNX-BAR subcomplexes associate with low affinity. The CSC associates with SNX3 to form a SNX3-retromer complex. The CSC associates with SNX27, the WASH complex and the SNX-BAR subcomplex to form the SNX27-retromer complex. Interacts with VPS29, VPS35, TBC1D5, GOLPH3, SNX27.

The protein localises to the cytoplasm. The protein resides in the membrane. It is found in the early endosome. Its subcellular location is the late endosome. Its function is as follows. Acts as a component of the retromer cargo-selective complex (CSC). The CSC is believed to be the core functional component of retromer or respective retromer complex variants acting to prevent missorting of selected transmembrane cargo proteins into the lysosomal degradation pathway. The recruitment of the CSC to the endosomal membrane involves RAB7A and SNX3. The SNX-BAR retromer mediates retrograde transport of cargo proteins from endosomes to the trans-Golgi network (TGN) and is involved in endosome-to-plasma membrane transport for cargo protein recycling. The SNX3-retromer mediates the retrograde transport of WLS distinct from the SNX-BAR retromer pathway. The SNX27-retromer is believed to be involved in endosome-to-plasma membrane trafficking and recycling of a broad spectrum of cargo proteins. The CSC seems to act as recruitment hub for other proteins, such as the WASH complex and TBC1D5. May be involved in retrograde transport of SORT1 but not of IGF2R. Acts redundantly with VSP26A in SNX-27 mediated endocytic recycling of SLC2A1/GLUT1. The sequence is that of Vacuolar protein sorting-associated protein 26B (VPS26B) from Pongo abelii (Sumatran orangutan).